Here is a 264-residue protein sequence, read N- to C-terminus: Ribosomal protein L11 methyltransferase (264 aa).

Residues T116, G137, D159, and N200 each coordinate S-adenosyl-L-methionine.

It belongs to the methyltransferase superfamily. PrmA family.

The protein resides in the cytoplasm. It carries out the reaction L-lysyl-[protein] + 3 S-adenosyl-L-methionine = N(6),N(6),N(6)-trimethyl-L-lysyl-[protein] + 3 S-adenosyl-L-homocysteine + 3 H(+). Its function is as follows. Methylates ribosomal protein L11. In Thermotoga neapolitana (strain ATCC 49049 / DSM 4359 / NBRC 107923 / NS-E), this protein is Ribosomal protein L11 methyltransferase.